The following is a 194-amino-acid chain: Protein GrpE (194 aa).

Over residues 1–24 (MEEKDKEEKVTGENLEPEDKNLEQ) the composition is skewed to basic and acidic residues. Positions 1 to 41 (MEEKDKEEKVTGENLEPEDKNLEQEDKEEVVGPQEEQQIDE) are disordered.

The protein belongs to the GrpE family. In terms of assembly, homodimer.

Its subcellular location is the cytoplasm. Participates actively in the response to hyperosmotic and heat shock by preventing the aggregation of stress-denatured proteins, in association with DnaK and GrpE. It is the nucleotide exchange factor for DnaK and may function as a thermosensor. Unfolded proteins bind initially to DnaJ; upon interaction with the DnaJ-bound protein, DnaK hydrolyzes its bound ATP, resulting in the formation of a stable complex. GrpE releases ADP from DnaK; ATP binding to DnaK triggers the release of the substrate protein, thus completing the reaction cycle. Several rounds of ATP-dependent interactions between DnaJ, DnaK and GrpE are required for fully efficient folding. This is Protein GrpE from Carboxydothermus hydrogenoformans (strain ATCC BAA-161 / DSM 6008 / Z-2901).